Here is a 544-residue protein sequence, read N- to C-terminus: Chaperonin GroEL (544 aa).

Residues 29 to 32 (TLGP), 86 to 90 (DGTTT), glycine 413, 476 to 478 (NAA), and aspartate 492 contribute to the ATP site.

Belongs to the chaperonin (HSP60) family. In terms of assembly, forms a cylinder of 14 subunits composed of two heptameric rings stacked back-to-back. Interacts with the co-chaperonin GroES.

The protein resides in the cytoplasm. The enzyme catalyses ATP + H2O + a folded polypeptide = ADP + phosphate + an unfolded polypeptide.. In terms of biological role, together with its co-chaperonin GroES, plays an essential role in assisting protein folding. The GroEL-GroES system forms a nano-cage that allows encapsulation of the non-native substrate proteins and provides a physical environment optimized to promote and accelerate protein folding. In Bacillus cereus (strain B4264), this protein is Chaperonin GroEL.